A 442-amino-acid chain; its full sequence is Transcription factor MYCFIDRAFT_198930 (442 aa).

The tract at residues 1 to 34 (MSTTPMAAPPGADLKPVTSSRGRSSTSDEQKLRS) is disordered. Residues 36-63 (CESCAQSKLKCSGDKPACARCAKRGLAC) constitute a DNA-binding region (zn(2)-C6 fungal-type). Residues 74 to 107 (KPKGYTSTNDNNPSKRREDSHSPAASQWSSTGHL) form a disordered region. A compositionally biased stretch (polar residues) spans 96 to 107 (PAASQWSSTGHL).

It is found in the nucleus. In terms of biological role, transcription factor that positively regulates the expression of the gene cluster that mediates the biosynthesis of an emodin derivative that may be involved in black Sigatoka disease of banana. This Pseudocercospora fijiensis (strain CIRAD86) (Black leaf streak disease fungus) protein is Transcription factor MYCFIDRAFT_198930.